The sequence spans 373 residues: Chaperone protein DnaJ (373 aa).

Positions 5 to 70 constitute a J domain; the sequence is DYYEVLGVNR…QKRAAYDQYG (66 aa). The CR-type zinc-finger motif lies at 133–211; the sequence is GTETKIRIPV…CHGGGRVKQH (79 aa). Zn(2+)-binding residues include cysteine 146, cysteine 149, cysteine 163, cysteine 166, cysteine 185, cysteine 188, cysteine 199, and cysteine 202. CXXCXGXG motif repeat units lie at residues 146-153, 163-170, 185-192, and 199-206; these read CETCHGSG, CSTCGGHG, CPKCHGSG, and CPTCHGGG. Positions 346–373 are disordered; sequence LEDINQQDSGKHSPREKSWMTKVKDFFQ. The span at 354–373 shows a compositional bias: basic and acidic residues; it reads SGKHSPREKSWMTKVKDFFQ.

Belongs to the DnaJ family. Homodimer. It depends on Zn(2+) as a cofactor.

Its subcellular location is the cytoplasm. Its function is as follows. Participates actively in the response to hyperosmotic and heat shock by preventing the aggregation of stress-denatured proteins and by disaggregating proteins, also in an autonomous, DnaK-independent fashion. Unfolded proteins bind initially to DnaJ; upon interaction with the DnaJ-bound protein, DnaK hydrolyzes its bound ATP, resulting in the formation of a stable complex. GrpE releases ADP from DnaK; ATP binding to DnaK triggers the release of the substrate protein, thus completing the reaction cycle. Several rounds of ATP-dependent interactions between DnaJ, DnaK and GrpE are required for fully efficient folding. Also involved, together with DnaK and GrpE, in the DNA replication of plasmids through activation of initiation proteins. In Methylobacillus flagellatus (strain ATCC 51484 / DSM 6875 / VKM B-1610 / KT), this protein is Chaperone protein DnaJ.